The primary structure comprises 346 residues: Cyclin-dependent kinase 20 (346 aa).

One can recognise a Protein kinase domain in the interval 4-288 (YCILGRIGEG…ASKALLHQYF (285 aa)). ATP is bound by residues 10–18 (IGEGAHGIV) and lysine 33. Aspartate 127 (proton acceptor) is an active-site residue.

Belongs to the protein kinase superfamily. CMGC Ser/Thr protein kinase family. CDC2/CDKX subfamily. In terms of assembly, monomer. Interacts with TBC1D32 and MAK.

The protein localises to the nucleus. It is found in the cytoplasm. The protein resides in the cell projection. Its subcellular location is the cilium. It catalyses the reaction L-seryl-[protein] + ATP = O-phospho-L-seryl-[protein] + ADP + H(+). The catalysed reaction is L-threonyl-[protein] + ATP = O-phospho-L-threonyl-[protein] + ADP + H(+). Required for high-level Shh responses in the developing neural tube. Together with TBC1D32, controls the structure of the primary cilium by coordinating assembly of the ciliary membrane and axoneme, allowing GLI2 to be properly activated in response to SHH signaling. Involved in cell growth. Activates CDK2, a kinase involved in the control of the cell cycle, by phosphorylating residue 'Thr-160'. The sequence is that of Cyclin-dependent kinase 20 (CDK20) from Pongo abelii (Sumatran orangutan).